The following is an 883-amino-acid chain: Phosphoenolpyruvate carboxylase (883 aa).

Active-site residues include His-138 and Lys-546.

Belongs to the PEPCase type 1 family. It depends on Mg(2+) as a cofactor.

The catalysed reaction is oxaloacetate + phosphate = phosphoenolpyruvate + hydrogencarbonate. Forms oxaloacetate, a four-carbon dicarboxylic acid source for the tricarboxylic acid cycle. The protein is Phosphoenolpyruvate carboxylase of Salmonella arizonae (strain ATCC BAA-731 / CDC346-86 / RSK2980).